The following is a 241-amino-acid chain: MAEEQPQVELFVKAGSDGAKIGNCPFSQRLFMVLWLKGVTFNVTTVDTKRRTETVHKLCPGGQLPFLLYGTEVHTDTNKIEEFLEAVLCPPRYPKLAALNPESNTAGVDIFAKFSAYIKNSNPALNDNLEKGLLKALKILDNYLTSPLPEEVDETSAEDEGISQRKFLDGNELTLADCNLLPKLHIVQVVCKKNRGFTIPEVFRGVHRYLSNAYAREEFASTCPDDEEIELAYEQVAKALK.

A2 is modified (N-acetylalanine). Residues 2–90 (AEEQPQVELF…EEFLEAVLCP (89 aa)) are required for insertion into the membrane. K13 bears the N6-acetyllysine mark. The G-site motif lies at 24–27 (CPFS). An intrachain disulfide couples C24 to C59. Residues 26–46 (FSQRLFMVLWLKGVTFNVTTV) traverse the membrane as a helical segment. The GST C-terminal domain maps to 93-233 (YPKLAALNPE…PDDEEIELAY (141 aa)). Residue K119 is modified to N6-acetyllysine. Position 121 is a phosphoserine (S121). Position 131 is an N6-acetyllysine (K131). Phosphoserine is present on residues S156 and S211. Residue Y233 is modified to Phosphotyrosine.

The protein belongs to the chloride channel CLIC family. In terms of assembly, monomer. Homodimer (in vitro). Interacts with TRAPPC2. Dimerization requires a conformation change that leads to the exposure of a large hydrophobic surface. In vivo, this may lead to membrane insertion.

Its subcellular location is the nucleus. It is found in the nucleus membrane. The protein resides in the cytoplasm. It localises to the cell membrane. The protein localises to the endoplasmic reticulum. The catalysed reaction is L-dehydroascorbate + 2 glutathione = glutathione disulfide + L-ascorbate. It carries out the reaction chloride(in) = chloride(out). The enzyme catalyses iodide(out) = iodide(in). It catalyses the reaction thiocyanate(in) = thiocyanate(out). The catalysed reaction is nitrate(in) = nitrate(out). It carries out the reaction bromide(in) = bromide(out). The enzyme catalyses fluoride(in) = fluoride(out). Functionally, in the soluble state, catalyzes glutaredoxin-like thiol disulfide exchange reactions with reduced glutathione as electron donor. Reduces selenite and dehydroascorbate and may act as an antioxidant during oxidative stress response. Can insert into membranes and form voltage-dependent multi-ion conductive channels. Membrane insertion seems to be redox-regulated and may occur only under oxidizing conditions. Involved in regulation of the cell cycle. The polypeptide is Chloride intracellular channel protein 1 (CLIC1) (Oryctolagus cuniculus (Rabbit)).